We begin with the raw amino-acid sequence, 197 residues long: Rac-like GTP-binding protein RAC1 (197 aa).

Position 13 to 20 (13 to 20 (GDGAVGKT)) interacts with GTP. The Effector region signature appears at 35–43 (YVPTVFDNF). Residues 60–64 (DTAGQ) and 118–121 (TKLD) contribute to the GTP site. Cys194 is subject to Cysteine methyl ester. Cys194 carries S-geranylgeranyl cysteine lipidation. The propeptide at 195 to 197 (SIL) is removed in mature form.

It belongs to the small GTPase superfamily. Rho family.

The protein resides in the cytoplasm. It is found in the membrane. Inactive GDP-bound Rho GTPases reside in the cytosol, are found in a complex with Rho GDP-dissociation inhibitors (Rho GDIs), and are released from the GDI protein in order to translocate to membranes upon activation. This Lotus japonicus (Lotus corniculatus var. japonicus) protein is Rac-like GTP-binding protein RAC1 (RAC1).